The sequence spans 631 residues: 1-deoxy-D-xylulose-5-phosphate synthase (631 aa).

Thiamine diphosphate contacts are provided by residues His-78 and 119–121 (AHS). Position 150 (Asp-150) interacts with Mg(2+). Thiamine diphosphate-binding positions include 151 to 152 (GA), Asn-179, Tyr-286, and Glu-368. A Mg(2+)-binding site is contributed by Asn-179.

The protein belongs to the transketolase family. DXPS subfamily. Homodimer. Mg(2+) serves as cofactor. It depends on thiamine diphosphate as a cofactor.

The enzyme catalyses D-glyceraldehyde 3-phosphate + pyruvate + H(+) = 1-deoxy-D-xylulose 5-phosphate + CO2. The protein operates within metabolic intermediate biosynthesis; 1-deoxy-D-xylulose 5-phosphate biosynthesis; 1-deoxy-D-xylulose 5-phosphate from D-glyceraldehyde 3-phosphate and pyruvate: step 1/1. In terms of biological role, catalyzes the acyloin condensation reaction between C atoms 2 and 3 of pyruvate and glyceraldehyde 3-phosphate to yield 1-deoxy-D-xylulose-5-phosphate (DXP). The protein is 1-deoxy-D-xylulose-5-phosphate synthase of Verminephrobacter eiseniae (strain EF01-2).